A 158-amino-acid chain; its full sequence is Transcriptional repressor NrdR (158 aa).

A zinc finger spans residues 3–34 (CPSCQNTDSRVLESRAADAGRSVRRRRECLHC). One can recognise an ATP-cone domain in the interval 49-139 (ITVLKRNGNR…VYRHFRGIND (91 aa)).

Belongs to the NrdR family. The cofactor is Zn(2+).

Functionally, negatively regulates transcription of bacterial ribonucleotide reductase nrd genes and operons by binding to NrdR-boxes. The chain is Transcriptional repressor NrdR from Prochlorococcus marinus (strain MIT 9303).